Consider the following 423-residue polypeptide: Glucose-1-phosphate adenylyltransferase (423 aa).

Alpha-D-glucose 1-phosphate-binding positions include Tyr108, Gly173, 188 to 189, and Ser207; that span reads EK.

Belongs to the bacterial/plant glucose-1-phosphate adenylyltransferase family. Homotetramer.

It carries out the reaction alpha-D-glucose 1-phosphate + ATP + H(+) = ADP-alpha-D-glucose + diphosphate. The protein operates within glycan biosynthesis; glycogen biosynthesis. Involved in the biosynthesis of ADP-glucose, a building block required for the elongation reactions to produce glycogen. Catalyzes the reaction between ATP and alpha-D-glucose 1-phosphate (G1P) to produce pyrophosphate and ADP-Glc. This Francisella tularensis subsp. novicida (strain U112) protein is Glucose-1-phosphate adenylyltransferase.